The following is a 234-amino-acid chain: Arsenate respiratory reductase iron-sulfur subunit ArrB (234 aa).

4Fe-4S ferredoxin-type domains are found at residues 3–32 (LGMV…NDGI), 48–79 (VKYT…KDKR), and 80–109 (GLTL…FNAA). [4Fe-4S] cluster is bound by residues Cys-12, Cys-15, Cys-18, Cys-22, Cys-57, Cys-60, Cys-65, Cys-69, Cys-89, Cys-92, Cys-95, Cys-99, Cys-164, Cys-167, Cys-179, and Cys-183.

In terms of assembly, heterodimer composed of one large subunit (ArrA) and one small subunit (ArrB). [4Fe-4S] cluster is required as a cofactor.

It is found in the periplasm. With respect to regulation, phosphate is a competitive inhibitor. Its function is as follows. Component of the arsenate respiratory reductase (Arr) complex, which catalyzes the reduction of arsenate (As(V)) to arsenite (As(III)). ArrB is probably the electron transfer subunit. The periplasmic localization of this complex may allow the cell to couple arsenate reduction to energy production before arsenate can be transported to the cell cytoplasm and enter the ars detoxification pathway, an energy-requiring process. The chain is Arsenate respiratory reductase iron-sulfur subunit ArrB from Shewanella sp. (strain ANA-3).